The following is a 63-amino-acid chain: Large ribosomal subunit protein bL28 (63 aa).

This sequence belongs to the bacterial ribosomal protein bL28 family.

The sequence is that of Large ribosomal subunit protein bL28 from Geotalea uraniireducens (strain Rf4) (Geobacter uraniireducens).